A 440-amino-acid polypeptide reads, in one-letter code: 5-hydroxytryptamine receptor 6 (440 aa).

At 1–27 (MVPEPGPTANSTPAWGAGPPSAPGGSG) the chain is on the extracellular side. A helical membrane pass occupies residues 28 to 52 (WVAAALCVVIALTAAANSLLIALIC). Over 53–62 (TQPALRNTSN) the chain is Cytoplasmic. The helical transmembrane segment at 63–88 (FFLVSLFTSDLMVGLVVMPPAMLNAL) threads the bilayer. Over 89-96 (YGRWVLAR) the chain is Extracellular. The helical transmembrane segment at 97-122 (GLCLLWTAFDVMCCSASILNLCLISL) threads the bilayer. A disulfide bond links Cys-99 and Cys-180. Asp-106 lines the serotonin pocket. Topologically, residues 123–142 (DRYLLILSPLRYKLRMTPLR) are cytoplasmic. The chain crosses the membrane as a helical span at residues 143–167 (ALALVLGAWSLAALASFLPLLLGWH). Residues 168–185 (ELGHARPPVPGQCRLLAS) lie on the Extracellular side of the membrane. Residues 186 to 209 (LPFVLVASGLTFFLPSGAICFTYC) traverse the membrane as a helical segment. Over 210–266 (RILLAARKQAVQVASLTTGMASQASETLQVPRTPRPGVESADSRRLATKHSRKALKA) the chain is Cytoplasmic. A helical transmembrane segment spans residues 267–293 (SLTLGILLGMFFVTWLPFFVANIVQAV). Asn-288 serves as a coordination point for serotonin. The Extracellular portion of the chain corresponds to 294-299 (CDCISP). Residues 300-323 (GLFDVLTWLGYCNSTMNPIIYPLF) traverse the membrane as a helical segment. Residues 324–440 (MRDFKRALGR…RPHPLGIPTN (117 aa)) are Cytoplasmic-facing. The segment at 346–392 (ASLASPSLRTSHSGPRPGLSLQQVLPLPLPPDSDSDSDAGSGGSSGL) is disordered. The segment covering 347 to 358 (SLASPSLRTSHS) has biased composition (polar residues). Over residues 362 to 371 (PGLSLQQVLP) the composition is skewed to low complexity.

It belongs to the G-protein coupled receptor 1 family. In terms of assembly, interacts with MTOR, RPTOR and NF1. Interacts with CDK5. In terms of tissue distribution, expressed in several human brain regions, most prominently in the caudate nucleus.

Its subcellular location is the cell membrane. In terms of biological role, G-protein coupled receptor for 5-hydroxytryptamine (serotonin), a biogenic hormone that functions as a neurotransmitter, a hormone and a mitogen. Also has a high affinity for tricyclic psychotropic drugs. Ligand binding causes a conformation change that triggers signaling via guanine nucleotide-binding proteins (G proteins) and modulates the activity of downstream effectors. HTR6 is coupled to G(s) G alpha proteins and mediates activation of adenylate cyclase activity. Controls pyramidal neurons migration during corticogenesis, through the regulation of CDK5 activity. Is an activator of mTOR signaling. The chain is 5-hydroxytryptamine receptor 6 from Homo sapiens (Human).